The following is a 765-amino-acid chain: E3 ubiquitin-protein ligase SMURF2 (765 aa).

A C2 domain is found at 1–117 (MSNQGVRRNG…KDTGYQRLDL (117 aa)). WW domains follow at residues 157–190 (NDLPDGWEERRTASGRIQYLNHITRSTQWERPTR), 251–284 (PDLPEGYEQRTTQQGQVYFLHTQTGVSTWHDPRV), and 297–330 (GPLPPGWEIRNTATGRVYFVDHNNRTTQFTDPRL). The interval 341–375 (SPNGSRAAVEAQSSSRPGQLKEQAQSVVSPGNLPE) is disordered. The segment covering 351–369 (AQSSSRPGQLKEQAQSVVS) has biased composition (polar residues). Positions 431–765 (RPKDLWKRLM…IEETCGFAVE (335 aa)) constitute an HECT domain. Cys-733 functions as the Glycyl thioester intermediate in the catalytic mechanism.

It localises to the nucleus. The protein resides in the cytoplasm. It is found in the cell membrane. The protein localises to the membrane raft. The catalysed reaction is S-ubiquitinyl-[E2 ubiquitin-conjugating enzyme]-L-cysteine + [acceptor protein]-L-lysine = [E2 ubiquitin-conjugating enzyme]-L-cysteine + N(6)-ubiquitinyl-[acceptor protein]-L-lysine.. It functions in the pathway protein modification; protein ubiquitination. Its function is as follows. E3 ubiquitin-protein ligase which accepts ubiquitin from an E2 ubiquitin-conjugating enzyme in the form of a thioester and then directly transfers the ubiquitin to targeted substrates. This chain is E3 ubiquitin-protein ligase SMURF2 (smurf2), found in Danio rerio (Zebrafish).